Reading from the N-terminus, the 482-residue chain is Potential E3 ubiquitin-protein ligase ariadne-2 (482 aa).

The segment at 125–334 (AKGYCSVCAM…SEYYECSRYK (210 aa)) is TRIAD supradomain. Residues C129, C132, C145, H147, C150, C153, C172, C177, C218, C223, C239, C242, C247, C250, H255, C260, C287, and C290 each coordinate Zn(2+). Residues 129–177 (CSVCAMDGYTELPHLTCGHCFCEHCWKSHVESRLSEGVASRIECMESEC) form an RING-type 1 zinc finger. The IBR-type zinc finger occupies 198–260 (LKYERFLLRD…GADYHAPTSC (63 aa)). The RING-type 2; atypical zinc-finger motif lies at 287–316 (CPQCHSCIEKAGGCNHIQCTRCRHHFCWMC). C300 is a catalytic residue. 6 residues coordinate Zn(2+): C305, C308, C313, C316, H323, and C330. The stretch at 433-459 (FEYQQAQLEKEVEELAWAVERADGTAR) forms a coiled coil.

This sequence belongs to the RBR family. Ariadne subfamily.

It is found in the nucleus. It carries out the reaction [E2 ubiquitin-conjugating enzyme]-S-ubiquitinyl-L-cysteine + [acceptor protein]-L-lysine = [E2 ubiquitin-conjugating enzyme]-L-cysteine + [acceptor protein]-N(6)-ubiquitinyl-L-lysine.. Might act as an E3 ubiquitin-protein ligase, or as part of E3 complex, which accepts ubiquitin from specific E2 ubiquitin-conjugating enzymes, such as UBC-2/UBE2L3, and then transfers it to substrates. In Caenorhabditis elegans, this protein is Potential E3 ubiquitin-protein ligase ariadne-2.